A 364-amino-acid polypeptide reads, in one-letter code: NADH-quinone oxidoreductase subunit H (364 aa).

8 consecutive transmembrane segments (helical) span residues 21-41 (AGQI…LLLA), 88-108 (VFLL…AVIP), 120-140 (VGIL…IMGG), 159-179 (MVSY…LAGS), 208-228 (LPLL…GLAE), 267-287 (IVLI…APFP), 301-321 (FYYF…VSMA), and 340-360 (VFLP…VFGP).

This sequence belongs to the complex I subunit 1 family. NDH-1 is composed of 14 different subunits. Subunits NuoA, H, J, K, L, M, N constitute the membrane sector of the complex.

It is found in the cell inner membrane. The catalysed reaction is a quinone + NADH + 5 H(+)(in) = a quinol + NAD(+) + 4 H(+)(out). In terms of biological role, NDH-1 shuttles electrons from NADH, via FMN and iron-sulfur (Fe-S) centers, to quinones in the respiratory chain. The immediate electron acceptor for the enzyme in this species is believed to be ubiquinone. Couples the redox reaction to proton translocation (for every two electrons transferred, four hydrogen ions are translocated across the cytoplasmic membrane), and thus conserves the redox energy in a proton gradient. This subunit may bind ubiquinone. The sequence is that of NADH-quinone oxidoreductase subunit H from Phenylobacterium zucineum (strain HLK1).